A 281-amino-acid chain; its full sequence is 4-diphosphocytidyl-2-C-methyl-D-erythritol kinase (281 aa).

Lys-11 is a catalytic residue. Residue 95 to 105 (PVAAGLGGGSS) participates in ATP binding. Residue Asp-137 is part of the active site.

It belongs to the GHMP kinase family. IspE subfamily.

The enzyme catalyses 4-CDP-2-C-methyl-D-erythritol + ATP = 4-CDP-2-C-methyl-D-erythritol 2-phosphate + ADP + H(+). It participates in isoprenoid biosynthesis; isopentenyl diphosphate biosynthesis via DXP pathway; isopentenyl diphosphate from 1-deoxy-D-xylulose 5-phosphate: step 3/6. Catalyzes the phosphorylation of the position 2 hydroxy group of 4-diphosphocytidyl-2C-methyl-D-erythritol. The sequence is that of 4-diphosphocytidyl-2-C-methyl-D-erythritol kinase from Geobacter metallireducens (strain ATCC 53774 / DSM 7210 / GS-15).